Reading from the N-terminus, the 330-residue chain is Aspartate--ammonia ligase (330 aa).

It belongs to the class-II aminoacyl-tRNA synthetase family. AsnA subfamily.

The protein localises to the cytoplasm. It carries out the reaction L-aspartate + NH4(+) + ATP = L-asparagine + AMP + diphosphate + H(+). It functions in the pathway amino-acid biosynthesis; L-asparagine biosynthesis; L-asparagine from L-aspartate (ammonia route): step 1/1. The polypeptide is Aspartate--ammonia ligase (Escherichia coli O45:K1 (strain S88 / ExPEC)).